A 169-amino-acid chain; its full sequence is MVGHSESSTDAVIEPTSEELLAEQVRVFNKMKGSTNFNRVAEDVYPVEVTKSKLVCEMVVQHQHLNSKGTLHGGQTATLTDVITARAVGVTVKDKGMASVELAVSYLLPVKVGDVLEITAHVLKVGRTMAFTDCEFRRKSDGKMSAKGKHTLAFLPNQPGISVENGTQF.

It belongs to the thioesterase paaI family.

This chain is Putative esterase F42H10.6, found in Caenorhabditis elegans.